We begin with the raw amino-acid sequence, 247 residues long: Small ribosomal subunit protein uS2 (247 aa).

This sequence belongs to the universal ribosomal protein uS2 family.

The protein is Small ribosomal subunit protein uS2 of Halorhodospira halophila (strain DSM 244 / SL1) (Ectothiorhodospira halophila (strain DSM 244 / SL1)).